Consider the following 353-residue polypeptide: Photosystem II D2 protein (353 aa).

Position 2 is an N-acetylthreonine (Thr-2). A Phosphothreonine modification is found at Thr-2. Residues 41 to 61 traverse the membrane as a helical segment; it reads CAYFALGGWLTGTTFVTSWYT. His-118 is a chlorophyll a binding site. The helical transmembrane segment at 125–141 threads the bilayer; the sequence is GFMLRQFEIARSVGLRP. Positions 130 and 143 each coordinate pheophytin a. The helical transmembrane segment at 153 to 166 threads the bilayer; it reads VFVSVFLIYPLGQS. Residue His-198 coordinates chlorophyll a. A helical transmembrane segment spans residues 208–228; that stretch reads AALLCAIHGATVENTIFEDGD. A plastoquinone is bound by residues His-215 and Phe-262. His-215 provides a ligand contact to Fe cation. His-269 provides a ligand contact to Fe cation. A helical transmembrane segment spans residues 279–295; it reads GLWMSAIGVVGLALNLR.

The protein belongs to the reaction center PufL/M/PsbA/D family. In terms of assembly, PSII is composed of 1 copy each of membrane proteins PsbA, PsbB, PsbC, PsbD, PsbE, PsbF, PsbH, PsbI, PsbJ, PsbK, PsbL, PsbM, PsbT, PsbX, PsbY, PsbZ, Psb30/Ycf12, at least 3 peripheral proteins of the oxygen-evolving complex and a large number of cofactors. It forms dimeric complexes. Requires The D1/D2 heterodimer binds P680, chlorophylls that are the primary electron donor of PSII, and subsequent electron acceptors. It shares a non-heme iron and each subunit binds pheophytin, quinone, additional chlorophylls, carotenoids and lipids. There is also a Cl(-1) ion associated with D1 and D2, which is required for oxygen evolution. The PSII complex binds additional chlorophylls, carotenoids and specific lipids. as cofactor.

It is found in the plastid. The protein localises to the chloroplast thylakoid membrane. It catalyses the reaction 2 a plastoquinone + 4 hnu + 2 H2O = 2 a plastoquinol + O2. Its function is as follows. Photosystem II (PSII) is a light-driven water:plastoquinone oxidoreductase that uses light energy to abstract electrons from H(2)O, generating O(2) and a proton gradient subsequently used for ATP formation. It consists of a core antenna complex that captures photons, and an electron transfer chain that converts photonic excitation into a charge separation. The D1/D2 (PsbA/PsbD) reaction center heterodimer binds P680, the primary electron donor of PSII as well as several subsequent electron acceptors. D2 is needed for assembly of a stable PSII complex. The protein is Photosystem II D2 protein of Staurastrum punctulatum (Green alga).